Here is a 543-residue protein sequence, read N- to C-terminus: Glucose-6-phosphate isomerase (543 aa).

Residue Glu353 is the Proton donor of the active site. Residues His384 and Lys512 contribute to the active site.

The protein belongs to the GPI family.

The protein resides in the cytoplasm. It catalyses the reaction alpha-D-glucose 6-phosphate = beta-D-fructose 6-phosphate. It participates in carbohydrate biosynthesis; gluconeogenesis. Its pathway is carbohydrate degradation; glycolysis; D-glyceraldehyde 3-phosphate and glycerone phosphate from D-glucose: step 2/4. Functionally, catalyzes the reversible isomerization of glucose-6-phosphate to fructose-6-phosphate. The chain is Glucose-6-phosphate isomerase from Christiangramia forsetii (strain DSM 17595 / CGMCC 1.15422 / KT0803) (Gramella forsetii).